The chain runs to 239 residues: tRNA (guanine-N(1)-)-methyltransferase (239 aa).

Residues glycine 113 and 137–142 contribute to the S-adenosyl-L-methionine site; that span reads LGDYVL.

Belongs to the RNA methyltransferase TrmD family. Homodimer.

It localises to the cytoplasm. It catalyses the reaction guanosine(37) in tRNA + S-adenosyl-L-methionine = N(1)-methylguanosine(37) in tRNA + S-adenosyl-L-homocysteine + H(+). In terms of biological role, specifically methylates guanosine-37 in various tRNAs. In Cutibacterium acnes (strain DSM 16379 / KPA171202) (Propionibacterium acnes), this protein is tRNA (guanine-N(1)-)-methyltransferase.